A 104-amino-acid polypeptide reads, in one-letter code: Probable guanidinium efflux system subunit GdnD (104 aa).

4 consecutive transmembrane segments (helical) span residues 3 to 23 (WICL…MNQF), 31 to 51 (WIFL…LAME), 58 to 78 (AYAV…ILFY), and 84 to 104 (GKRI…KLIS).

This sequence belongs to the drug/metabolite transporter (DMT) superfamily. Small multidrug resistance (SMR) (TC 2.A.7.1) family. YkkC/YkkD subfamily. In terms of assembly, the efflux pump is composed of GdnC and GdnD.

It is found in the cell membrane. In terms of biological role, probably involved in guanidinium transport. The sequence is that of Probable guanidinium efflux system subunit GdnD from Bacillus licheniformis (strain ATCC 14580 / DSM 13 / JCM 2505 / CCUG 7422 / NBRC 12200 / NCIMB 9375 / NCTC 10341 / NRRL NRS-1264 / Gibson 46).